The chain runs to 130 residues: Phosphoribosyl-AMP cyclohydrolase 1 (130 aa).

Asp77 provides a ligand contact to Mg(2+). Cys78 is a binding site for Zn(2+). Residues Asp79 and Asp81 each coordinate Mg(2+). Residues Cys95 and Cys102 each coordinate Zn(2+).

The protein belongs to the PRA-CH family. Homodimer. The cofactor is Mg(2+). Zn(2+) serves as cofactor.

It localises to the cytoplasm. It catalyses the reaction 1-(5-phospho-beta-D-ribosyl)-5'-AMP + H2O = 1-(5-phospho-beta-D-ribosyl)-5-[(5-phospho-beta-D-ribosylamino)methylideneamino]imidazole-4-carboxamide. It functions in the pathway amino-acid biosynthesis; L-histidine biosynthesis; L-histidine from 5-phospho-alpha-D-ribose 1-diphosphate: step 3/9. Catalyzes the hydrolysis of the adenine ring of phosphoribosyl-AMP. The chain is Phosphoribosyl-AMP cyclohydrolase 1 from Pseudomonas fluorescens (strain ATCC BAA-477 / NRRL B-23932 / Pf-5).